Consider the following 425-residue polypeptide: Glutamyl-tRNA reductase (425 aa).

Residues Thr49–Arg52, Ser109, Glu114–Gln116, and Gln120 contribute to the substrate site. The active-site Nucleophile is the Cys50. Gly189–Gly194 contributes to the NADP(+) binding site.

The protein belongs to the glutamyl-tRNA reductase family. As to quaternary structure, homodimer.

It carries out the reaction (S)-4-amino-5-oxopentanoate + tRNA(Glu) + NADP(+) = L-glutamyl-tRNA(Glu) + NADPH + H(+). It participates in porphyrin-containing compound metabolism; protoporphyrin-IX biosynthesis; 5-aminolevulinate from L-glutamyl-tRNA(Glu): step 1/2. Its pathway is porphyrin-containing compound metabolism; chlorophyll biosynthesis. Catalyzes the NADPH-dependent reduction of glutamyl-tRNA(Glu) to glutamate 1-semialdehyde (GSA). The chain is Glutamyl-tRNA reductase from Chlorobium phaeovibrioides (strain DSM 265 / 1930) (Prosthecochloris vibrioformis (strain DSM 265)).